The primary structure comprises 227 residues: MGNCVGRQRRERPAAPGHPRKRAGRNEPLKKERLKWKSDYPMTDGQLRSKRDEFWDTAPAFEGRKEIWDALKAAAYAAEANDHELAQAILDGASITLPHGTLCECYDELGNRYQLPIYCLSPPVNLLLEHTEEESLEPPEPTPSVRREFPLKVRLSTGKDVRLSASLPDTVGQLKRQLHSQEGIEPSWQRWFFSGKLLTDRTRLQETKIQKDFVIQVIINQPPPPQD.

A disordered region spans residues 1-35 (MGNCVGRQRRERPAAPGHPRKRAGRNEPLKKERLK). Basic and acidic residues predominate over residues 24 to 35 (GRNEPLKKERLK). Residues 149–224 (FPLKVRLSTG…IQVIINQPPP (76 aa)) form the Ubiquitin-like domain.

Interacts with UBTD1.

In terms of biological role, may be involved in the regulation of cellular senescence through a positive feedback loop with TP53. Is a TP53 downstream target gene that increases the stability of TP53 protein by promoting the ubiquitination and degradation of MDM2. This Rattus norvegicus (Rat) protein is Ubiquitin domain-containing protein 1 (Ubtd1).